The chain runs to 364 residues: MTQPWGPQMLAGGQPPESHEDSTQASIFTYTNSNSTRGPFEGPNFHIAPRWVYHLTSAWMILVVIASVFTNGLVLVATMRFKKLRHPLNWILVNLAVADLAETVIASTISVVNQFYGYFVLGHPLCVVEGYTVSLCGITGLWSLAIISWERWLVVCKPFGNVRFDAKLAIAGIAFSWIWAAVWTAPPIFGWSRYWPYGLKTSCGPDVFSGTSYPGVQSYMMVLMVTCCIIPLSVIVLCYLQVWMAIRTVAKQQKESESTQKAEKEVTRMVVVMVFAYCLCWGPYTFFACFATAHPGYSFHPLVAAIPSYFAKSATIYNPIIYVFMNRQFRNCILQLFGKKVEDSSELSSASRTEASSVSSVSPA.

A disordered region spans residues 1 to 23 (MTQPWGPQMLAGGQPPESHEDST). The Extracellular portion of the chain corresponds to 1-52 (MTQPWGPQMLAGGQPPESHEDSTQASIFTYTNSNSTRGPFEGPNFHIAPRWV). The required for 11-cis-retinal regeneration stretch occupies residues 17-43 (ESHEDSTQASIFTYTNSNSTRGPFEGP). N34 is a glycosylation site (N-linked (GlcNAc...) asparagine). The chain crosses the membrane as a helical span at residues 53–77 (YHLTSAWMILVVIASVFTNGLVLVA). At 78–89 (TMRFKKLRHPLN) the chain is on the cytoplasmic side. The chain crosses the membrane as a helical span at residues 90–115 (WILVNLAVADLAETVIASTISVVNQF). The Extracellular segment spans residues 116 to 129 (YGYFVLGHPLCVVE). C126 and C203 form a disulfide bridge. A helical transmembrane segment spans residues 130–149 (GYTVSLCGITGLWSLAIISW). Over 150 to 168 (ERWLVVCKPFGNVRFDAKL) the chain is Cytoplasmic. The chain crosses the membrane as a helical span at residues 169 to 192 (AIAGIAFSWIWAAVWTAPPIFGWS). The Extracellular portion of the chain corresponds to 193 to 218 (RYWPYGLKTSCGPDVFSGTSYPGVQS). Residues 219–246 (YMMVLMVTCCIIPLSVIVLCYLQVWMAI) form a helical membrane-spanning segment. Residues 247 to 268 (RTVAKQQKESESTQKAEKEVTR) are Cytoplasmic-facing. The helical transmembrane segment at 269 to 292 (MVVVMVFAYCLCWGPYTFFACFAT) threads the bilayer. At 293–300 (AHPGYSFH) the chain is on the extracellular side. A helical membrane pass occupies residues 301–325 (PLVAAIPSYFAKSATIYNPIIYVFM). K312 carries the post-translational modification N6-(retinylidene)lysine. Topologically, residues 326–364 (NRQFRNCILQLFGKKVEDSSELSSASRTEASSVSSVSPA) are cytoplasmic.

Belongs to the G-protein coupled receptor 1 family. Opsin subfamily. In terms of assembly, monomer. Homodimer. Homotetramer. In terms of processing, O-glycosylated. Phosphorylated on some or all of the serine and threonine residues present in the C-terminal region. As to expression, expressed in cone photoreceptor cells.

Its subcellular location is the membrane. Functionally, visual pigments are the light-absorbing molecules that mediate vision. They consist of an apoprotein, opsin, covalently linked to cis-retinal. May increase spectral sensitivity in dim light. The chain is Medium-wave-sensitive opsin 1 (OPN1MW) from Oryctolagus cuniculus (Rabbit).